The following is a 187-amino-acid chain: Ribosome maturation factor RimM (187 aa).

Residues 95 to 178 (DEDEFFYADL…GLVEDKDESL (84 aa)) enclose the PRC barrel domain.

It belongs to the RimM family. In terms of assembly, binds ribosomal protein uS19.

Its subcellular location is the cytoplasm. In terms of biological role, an accessory protein needed during the final step in the assembly of 30S ribosomal subunit, possibly for assembly of the head region. Essential for efficient processing of 16S rRNA. May be needed both before and after RbfA during the maturation of 16S rRNA. It has affinity for free ribosomal 30S subunits but not for 70S ribosomes. This is Ribosome maturation factor RimM from Sinorhizobium fredii (strain NBRC 101917 / NGR234).